Consider the following 270-residue polypeptide: Acyl-[acyl-carrier-protein]--UDP-N-acetylglucosamine O-acyltransferase (270 aa).

Belongs to the transferase hexapeptide repeat family. LpxA subfamily. As to quaternary structure, homotrimer.

It localises to the cytoplasm. It catalyses the reaction a (3R)-hydroxyacyl-[ACP] + UDP-N-acetyl-alpha-D-glucosamine = a UDP-3-O-[(3R)-3-hydroxyacyl]-N-acetyl-alpha-D-glucosamine + holo-[ACP]. It functions in the pathway glycolipid biosynthesis; lipid IV(A) biosynthesis; lipid IV(A) from (3R)-3-hydroxytetradecanoyl-[acyl-carrier-protein] and UDP-N-acetyl-alpha-D-glucosamine: step 1/6. Functionally, involved in the biosynthesis of lipid A, a phosphorylated glycolipid that anchors the lipopolysaccharide to the outer membrane of the cell. The protein is Acyl-[acyl-carrier-protein]--UDP-N-acetylglucosamine O-acyltransferase of Helicobacter pylori (strain G27).